We begin with the raw amino-acid sequence, 139 residues long: uncharacterized protein (139 aa).

The span at 1 to 11 (MALSMSLSSDI) shows a compositional bias: polar residues. 2 disordered regions span residues 1-80 (MALS…AAAA) and 100-139 (ASSP…LARS). The span at 63 to 80 (GAGSASAGGSRLAAAAAA) shows a compositional bias: low complexity.

This is an uncharacterized protein from Homo sapiens (Human).